Consider the following 1742-residue polypeptide: NACHT and WD repeat domain-containing protein 2 (1742 aa).

LRR repeat units follow at residues 386–410 (FYEY…GHIN), 677–698 (LEDV…TRPS), 724–747 (VKNV…LYLQ), 883–906 (YSQE…VIAF), and 925–953 (LPKL…SSMD). One can recognise an NACHT domain in the interval 410 to 737 (NPLVVYGGPC…TLLVWANRHL (328 aa)). 11 WD repeats span residues 963-1004 (LASS…LLRQ), 1007-1046 (TAQS…LLSE), 1140-1179 (FSGG…NPQL), 1229-1271 (RHNE…ASLQ), 1272-1311 (ESSG…AMSN), 1314-1353 (KTGK…IEAV), 1355-1394 (KHEG…NLFR), 1396-1434 (NGQR…RVCN), 1476-1516 (EDGI…ICRR), 1522-1561 (NFLK…LRVV), and 1614-1653 (SLYK…DAAL). Residues 1702 to 1721 (PITVSDSSESNEATPSKKHN) form a disordered region. The span at 1703–1715 (ITVSDSSESNEAT) shows a compositional bias: polar residues.

This is NACHT and WD repeat domain-containing protein 2 (Nwd2) from Mus musculus (Mouse).